The chain runs to 202 residues: Nucleoside triphosphate pyrophosphatase (202 aa).

The Proton acceptor role is filled by D79.

Belongs to the Maf family. It depends on a divalent metal cation as a cofactor.

The protein resides in the cytoplasm. It catalyses the reaction a ribonucleoside 5'-triphosphate + H2O = a ribonucleoside 5'-phosphate + diphosphate + H(+). The catalysed reaction is a 2'-deoxyribonucleoside 5'-triphosphate + H2O = a 2'-deoxyribonucleoside 5'-phosphate + diphosphate + H(+). Nucleoside triphosphate pyrophosphatase. May have a dual role in cell division arrest and in preventing the incorporation of modified nucleotides into cellular nucleic acids. This Rhodopseudomonas palustris (strain BisB18) protein is Nucleoside triphosphate pyrophosphatase.